Reading from the N-terminus, the 447-residue chain is UPF0210 protein LSEI_0897 (447 aa).

It belongs to the UPF0210 family. Homodimer.

The sequence is that of UPF0210 protein LSEI_0897 from Lacticaseibacillus paracasei (strain ATCC 334 / BCRC 17002 / CCUG 31169 / CIP 107868 / KCTC 3260 / NRRL B-441) (Lactobacillus paracasei).